A 338-amino-acid polypeptide reads, in one-letter code: Cytosolic sulfotransferase 16 (338 aa).

Residue 81-86 coordinates 3'-phosphoadenylyl sulfate; sequence KTGTTW. The active-site Proton acceptor is the histidine 143. 3'-phosphoadenylyl sulfate contacts are provided by residues arginine 165, serine 173, tyrosine 231, and 301 to 303; that span reads RKG.

Belongs to the sulfotransferase 1 family. Highly expressed in roots, stems and mature leaves. Low expression in young leaves and flowers. Barely detected in siliques.

The protein resides in the cytoplasm. The enzyme catalyses (Z)-desulfoglucotropeolin + 3'-phosphoadenylyl sulfate = (Z)-glucotropeolin + adenosine 3',5'-bisphosphate + H(+). It catalyses the reaction (Z)-indolylmethyl desulfoglucosinolate + 3'-phosphoadenylyl sulfate = (Z)-glucobrassicin + adenosine 3',5'-bisphosphate + H(+). Inhibited by phosphoadenosine 5'-phosphate (PAP). Sulfotransferase that utilizes 3'-phospho-5'-adenylyl sulfate (PAPS) as sulfonate donor to catalyze the sulfate conjugation of desulfo-glucosinolates (dsGSs), the final step in the biosynthesis of the glucosinolate core structure. Substrate preference is desulfo-2-phenylethyl glucosinolate &gt; desulfo-indol-3-yl methyl glucosinolate &gt; desulfo-benzyl glucosinolate &gt; desulfo-6-methylthiohexyl glucosinolate &gt; desulfo-4-methylthiobutyl glucosinolate &gt; desulfo-3-methylthiopropyl glucosinolate &gt; desulfo-singrin &gt; desulfo-3-butenyl glucosinolate. The polypeptide is Cytosolic sulfotransferase 16 (SOT16) (Arabidopsis thaliana (Mouse-ear cress)).